The chain runs to 385 residues: Putative cell agglutination protein pfl8 (385 aa).

A signal peptide spans 1–20 (MNSYISLIFTLLFFTSAARS). The disordered stretch occupies residues 41-90 (SSEFTSTITPETPSSSSSTFVPISTHTSSATNTTSGQLSISSSSSTSSEY). N-linked (GlcNAc...) asparagine glycosylation is found at Asn72, Asn270, and Asn346. Positions 196–360 (EVSTFNKPAY…GPVRTTSYSY (165 aa)) constitute a PA14 domain.

Its subcellular location is the secreted. The protein localises to the cell surface. Its function is as follows. May be involved in agglutination during conjugation or other aspects of colony formation. Induces flocculation when overexpressed. This Schizosaccharomyces pombe (strain 972 / ATCC 24843) (Fission yeast) protein is Putative cell agglutination protein pfl8.